We begin with the raw amino-acid sequence, 191 residues long: Pyridoxal 5'-phosphate synthase subunit PdxT (191 aa).

Residue 48 to 50 (GES) participates in L-glutamine binding. The active-site Nucleophile is the cysteine 81. Residues arginine 109 and 136–137 (IR) contribute to the L-glutamine site. Active-site charge relay system residues include histidine 172 and glutamate 174.

This sequence belongs to the glutaminase PdxT/SNO family. In the presence of PdxS, forms a dodecamer of heterodimers. Only shows activity in the heterodimer.

It catalyses the reaction aldehydo-D-ribose 5-phosphate + D-glyceraldehyde 3-phosphate + L-glutamine = pyridoxal 5'-phosphate + L-glutamate + phosphate + 3 H2O + H(+). The enzyme catalyses L-glutamine + H2O = L-glutamate + NH4(+). Its pathway is cofactor biosynthesis; pyridoxal 5'-phosphate biosynthesis. In terms of biological role, catalyzes the hydrolysis of glutamine to glutamate and ammonia as part of the biosynthesis of pyridoxal 5'-phosphate. The resulting ammonia molecule is channeled to the active site of PdxS. This Thermus thermophilus (strain ATCC BAA-163 / DSM 7039 / HB27) protein is Pyridoxal 5'-phosphate synthase subunit PdxT.